Consider the following 952-residue polypeptide: Probable RNA-binding protein 19 (952 aa).

Residues 2–79 (SRLIVKNLPN…TRITVEFCKS (78 aa)) enclose the RRM 1 domain. Disordered regions lie at residues 85 to 126 (KPRA…LEKL), 159 to 267 (KAKT…RGAV), and 367 to 395 (KQAP…EEED). Positions 95–109 (KSSQPKQPSQDSVPS) are enriched in low complexity. Over residues 163 to 180 (KASSDYLNFDSDSNSDSG) the composition is skewed to polar residues. Phosphoserine occurs at positions 177, 179, and 183. 2 stretches are compositionally biased toward acidic residues: residues 181-196 (QESE…EEEQ) and 224-251 (SSED…EEEG). RRM domains lie at 293–368 (YTVK…REKQ) and 400–478 (GRLF…PSTI). Lysine 479 participates in a covalent cross-link: Glycyl lysine isopeptide (Lys-Gly) (interchain with G-Cter in SUMO2). The interval 481–504 (EASQEANAPGSSYKKKKEAMDKAN) is disordered. Positions 584–656 (TVILAKNLPA…VPLYLEWAPI (73 aa)) constitute an RRM 4 domain. Residues 664–679 (QKKDSQHEQPAEKAEV) are compositionally biased toward basic and acidic residues. The interval 664 to 719 (QKKDSQHEQPAEKAEVEQETVLDPEGEKASVEGAEASTGKMEEEEEEEEEEEEESI) is disordered. The residue at position 693 (serine 693) is a Phosphoserine. The span at 705 to 718 (EEEEEEEEEEEEES) shows a compositional bias: acidic residues. RRM domains follow at residues 722–803 (CTLF…ISER) and 824–904 (SKIL…WADS). Phosphoserine is present on residues serine 928 and serine 944.

It belongs to the RRM MRD1 family. As to expression, expressed in the crypts of Lieberkuhn of the intestine (at protein level).

The protein localises to the nucleus. It localises to the nucleolus. Its subcellular location is the nucleoplasm. It is found in the cytoplasm. The protein resides in the chromosome. Its function is as follows. Plays a role in embryo pre-implantation development. The chain is Probable RNA-binding protein 19 (Rbm19) from Mus musculus (Mouse).